The chain runs to 612 residues: Threonine--tRNA ligase (612 aa).

The segment at 218 to 509 (DHRKLGVELG…LSEHFGGNFP (292 aa)) is catalytic. Cysteine 310, histidine 361, and histidine 486 together coordinate Zn(2+).

The protein belongs to the class-II aminoacyl-tRNA synthetase family. Homodimer. Requires Zn(2+) as cofactor.

The protein localises to the cytoplasm. It carries out the reaction tRNA(Thr) + L-threonine + ATP = L-threonyl-tRNA(Thr) + AMP + diphosphate + H(+). In terms of biological role, catalyzes the attachment of threonine to tRNA(Thr) in a two-step reaction: L-threonine is first activated by ATP to form Thr-AMP and then transferred to the acceptor end of tRNA(Thr). Also edits incorrectly charged L-seryl-tRNA(Thr). This Helicobacter pylori (strain P12) protein is Threonine--tRNA ligase.